Consider the following 334-residue polypeptide: Galactinol synthase 4 (334 aa).

The active site involves lysine 104. Positions 120, 122, and 258 each coordinate Mn(2+).

The protein belongs to the glycosyltransferase 8 family. Galactosyltransferase subfamily. The cofactor is a divalent metal cation.

It localises to the cytoplasm. It catalyses the reaction myo-inositol + UDP-alpha-D-galactose = alpha-D-galactosyl-(1-&gt;3)-1D-myo-inositol + UDP + H(+). Galactinol synthase involved in the biosynthesis of raffinose family oligosaccharides (RFOs) that function as osmoprotectants. May promote plant stress tolerance. This is Galactinol synthase 4 (GOLS4) from Arabidopsis thaliana (Mouse-ear cress).